The sequence spans 427 residues: 3-phosphoshikimate 1-carboxyvinyltransferase (427 aa).

3 residues coordinate 3-phosphoshikimate: lysine 20, serine 21, and arginine 25. Lysine 20 contributes to the phosphoenolpyruvate binding site. Phosphoenolpyruvate contacts are provided by glycine 92 and arginine 120. Serine 166, glutamine 168, aspartate 312, and lysine 339 together coordinate 3-phosphoshikimate. Phosphoenolpyruvate is bound at residue glutamine 168. Aspartate 312 (proton acceptor) is an active-site residue. Arginine 343 and arginine 385 together coordinate phosphoenolpyruvate.

This sequence belongs to the EPSP synthase family. In terms of assembly, monomer.

The protein resides in the cytoplasm. It catalyses the reaction 3-phosphoshikimate + phosphoenolpyruvate = 5-O-(1-carboxyvinyl)-3-phosphoshikimate + phosphate. The protein operates within metabolic intermediate biosynthesis; chorismate biosynthesis; chorismate from D-erythrose 4-phosphate and phosphoenolpyruvate: step 6/7. Its function is as follows. Catalyzes the transfer of the enolpyruvyl moiety of phosphoenolpyruvate (PEP) to the 5-hydroxyl of shikimate-3-phosphate (S3P) to produce enolpyruvyl shikimate-3-phosphate and inorganic phosphate. The polypeptide is 3-phosphoshikimate 1-carboxyvinyltransferase (Streptococcus thermophilus (strain ATCC BAA-491 / LMD-9)).